The chain runs to 281 residues: Probable endonuclease 4 (281 aa).

Zn(2+) contacts are provided by H69, H109, E145, D179, H182, H216, D229, H231, and E261.

The protein belongs to the AP endonuclease 2 family. Zn(2+) is required as a cofactor.

It catalyses the reaction Endonucleolytic cleavage to 5'-phosphooligonucleotide end-products.. Endonuclease IV plays a role in DNA repair. It cleaves phosphodiester bonds at apurinic or apyrimidinic (AP) sites, generating a 3'-hydroxyl group and a 5'-terminal sugar phosphate. This Buchnera aphidicola subsp. Acyrthosiphon pisum (strain APS) (Acyrthosiphon pisum symbiotic bacterium) protein is Probable endonuclease 4.